The chain runs to 278 residues: Envelope glycoprotein L (278 aa).

Residues 1-30 (MCRRPDCGFSFSPGPVILLWCCLLLPIVSS) form the signal peptide. The 214-residue stretch at 43–256 (VPAECPELTR…DKYYAGLPPE (214 aa)) folds into the gL betaherpesvirus-type domain. An intrachain disulfide couples Cys154 to Cys159.

Belongs to the herpesviridae glycoprotein L (gL) family. Betaherpesvirinae gL subfamily. Interacts with glycoprotein H (gH); this interaction is necessary for the correct processing and cell surface expression of gH. Forms the envelope pentamer complex (PC) composed of gH, gL, UL128, UL130, and UL131A. The pentamer interacts with host NRP2. Forms the envelope trimer complex composed of gH, gL, and gO. The trimer interacts with host PDGFRA. The trimer also interacts with host EPHA2.

The protein resides in the virion membrane. Its subcellular location is the host cell membrane. It localises to the host Golgi apparatus. It is found in the host trans-Golgi network. Functionally, the heterodimer glycoprotein H-glycoprotein L is required for the fusion of viral and plasma membranes leading to virus entry into the host cell. Acts as a functional inhibitor of gH and maintains gH in an inhibited form. Upon binding to host integrins, gL dissociates from gH leading to activation of the viral fusion glycoproteins gB and gH. In human cytomegalovirus, forms two distincts complexes to mediate viral entry, a trimer and a pentamer at the surface of the virion envelope. The gH-gL-gO trimer is required for infection in fibroblasts by interacting with host PDGFRA, and in glioblastoma cells by interacting with host EPHA2. The gH-gL-UL128-UL130-UL131A pentamer is essential for viral entry in epithelial, endothelial and myeloid cells via interaction with host NRP2. This Human cytomegalovirus (strain 5035) (HHV-5) protein is Envelope glycoprotein L.